Here is a 263-residue protein sequence, read N- to C-terminus: 4-hydroxy-tetrahydrodipicolinate reductase (263 aa).

Residues 8 to 13, aspartate 34, 99 to 101, and 125 to 128 each bind NAD(+); these read GACGRM, GTT, and SPNY. Histidine 157 functions as the Proton donor/acceptor in the catalytic mechanism. Histidine 158 is a (S)-2,3,4,5-tetrahydrodipicolinate binding site. Lysine 161 acts as the Proton donor in catalysis. 167 to 168 contacts (S)-2,3,4,5-tetrahydrodipicolinate; it reads GT.

Belongs to the DapB family.

It localises to the cytoplasm. The catalysed reaction is (S)-2,3,4,5-tetrahydrodipicolinate + NAD(+) + H2O = (2S,4S)-4-hydroxy-2,3,4,5-tetrahydrodipicolinate + NADH + H(+). It carries out the reaction (S)-2,3,4,5-tetrahydrodipicolinate + NADP(+) + H2O = (2S,4S)-4-hydroxy-2,3,4,5-tetrahydrodipicolinate + NADPH + H(+). Its pathway is amino-acid biosynthesis; L-lysine biosynthesis via DAP pathway; (S)-tetrahydrodipicolinate from L-aspartate: step 4/4. Its function is as follows. Catalyzes the conversion of 4-hydroxy-tetrahydrodipicolinate (HTPA) to tetrahydrodipicolinate. The protein is 4-hydroxy-tetrahydrodipicolinate reductase of Methanosarcina acetivorans (strain ATCC 35395 / DSM 2834 / JCM 12185 / C2A).